A 273-amino-acid polypeptide reads, in one-letter code: Small ribosomal subunit protein uS3 (273 aa).

In terms of domain architecture, KH type-2 spans 43–111 (IRQLMSTGME…QVQLNILEVK (69 aa)). Positions 218–227 (QQAAAAPSRG) are enriched in low complexity. Residues 218–273 (QQAAAAPSRGRAGDRPGRPGGDRRRRNDRPAAEAAPAAVEAPAAEAAAPAAEGGQA) form a disordered region. Basic and acidic residues predominate over residues 228–239 (RAGDRPGRPGGD). The span at 249–273 (AEAAPAAVEAPAAEAAAPAAEGGQA) shows a compositional bias: low complexity.

It belongs to the universal ribosomal protein uS3 family. In terms of assembly, part of the 30S ribosomal subunit. Forms a tight complex with proteins S10 and S14.

Binds the lower part of the 30S subunit head. Binds mRNA in the 70S ribosome, positioning it for translation. This Paenarthrobacter aurescens (strain TC1) protein is Small ribosomal subunit protein uS3.